Here is a 684-residue protein sequence, read N- to C-terminus: Beta-taxilin (684 aa).

Residues 1-26 (MEANHSEQLSAERQSTPPGDSSSLPS) are compositionally biased toward polar residues. The disordered stretch occupies residues 1–132 (MEANHSEQLS…KEPVSNKEQK (132 aa)). Over residues 45–64 (PEKEASVHPDISEELNRQLE) the composition is skewed to basic and acidic residues. The span at 93-107 (ESPDNEDGDCEETTE) shows a compositional bias: acidic residues. 2 coiled-coil regions span residues 135 to 351 (KKIL…VLKE) and 378 to 467 (NEVF…SEKD). Residues 458-475 (IRDAEISEKDDQSQHNSD) show a composition bias toward basic and acidic residues. Disordered regions lie at residues 458-485 (IRDA…VSVD), 514-632 (ESTP…DVPA), and 646-684 (PACE…EGVD). Phosphoserine occurs at positions 474 and 483. The segment covering 514 to 524 (ESTPHQSKETQ) has biased composition (basic and acidic residues). Polar residues predominate over residues 613–622 (QAPQAPTEAS).

The protein belongs to the taxilin family. Binds to the C-terminal coiled coil region of syntaxin family members STX1A, STX3A and STX4A. Has a preference for STX1A. As to expression, expressed in skeletal muscle.

Functionally, promotes motor nerve regeneration. May be involved in intracellular vesicle traffic. This Homo sapiens (Human) protein is Beta-taxilin (TXLNB).